The chain runs to 102 residues: ATP-dependent Clp protease adapter protein ClpS (102 aa).

Belongs to the ClpS family. As to quaternary structure, binds to the N-terminal domain of the chaperone ClpA.

Functionally, involved in the modulation of the specificity of the ClpAP-mediated ATP-dependent protein degradation. The sequence is that of ATP-dependent Clp protease adapter protein ClpS from Shewanella woodyi (strain ATCC 51908 / MS32).